A 310-amino-acid polypeptide reads, in one-letter code: Probable metallo-hydrolase Mb2322c (310 aa).

Residues 1 to 29 (MVATRGRPCPTNFSRPQRPRVAGNGTKSQ) form a disordered region. Positions 137, 139, 141, 142, 221, 242, and 288 each coordinate Zn(2+).

This sequence belongs to the metallo-beta-lactamase superfamily. Zn(2+) is required as a cofactor.

The sequence is that of Probable metallo-hydrolase Mb2322c from Mycobacterium bovis (strain ATCC BAA-935 / AF2122/97).